We begin with the raw amino-acid sequence, 406 residues long: COP9 signalosome complex subunit 4 (406 aa).

Ala-2 is subject to N-acetylalanine. Lys-25 carries the N6-acetyllysine modification. Residues 197-366 (YRRKFIEAAQ…GIVHFETREA (170 aa)) form the PCI domain.

This sequence belongs to the CSN4 family. Component of the CSN complex, composed of COPS1/GPS1, COPS2, COPS3, COPS4, COPS5, COPS6, COPS7 (COPS7A or COPS7B), COPS8 and COPS9. In the complex, it probably interacts directly with COPS1, COPS2, COPS3, COPS5, COPS6, COPS7 (COPS7A or COPS7B) and COPS8. Interacts with TOR1A; the interaction is direct and associates TOR1A and SNAPIN with the CSN complex. Interacts with STON2; controls STON2 neddylation levels. Interacts with ERCC6.

The protein localises to the cytoplasm. It localises to the nucleus. It is found in the cytoplasmic vesicle. The protein resides in the secretory vesicle. Its subcellular location is the synaptic vesicle. Component of the COP9 signalosome complex (CSN), a complex involved in various cellular and developmental processes. The CSN complex is an essential regulator of the ubiquitin (Ubl) conjugation pathway by mediating the deneddylation of the cullin subunits of SCF-type E3 ligase complexes, leading to decrease the Ubl ligase activity of SCF-type complexes such as SCF, CSA or DDB2. Also involved in the deneddylation of non-cullin subunits such as STON2. The complex is also involved in phosphorylation of p53/TP53, c-jun/JUN, IkappaBalpha/NFKBIA, ITPK1, IRF8/ICSBP and SNAPIN, possibly via its association with CK2 and PKD kinases. CSN-dependent phosphorylation of TP53 and JUN promotes and protects degradation by the Ubl system, respectively. This Mus musculus (Mouse) protein is COP9 signalosome complex subunit 4 (Cops4).